Reading from the N-terminus, the 514-residue chain is FAD-dependent monooxygenase AacuC (514 aa).

The tract at residues 1–29 is disordered; that stretch reads MVSNEYLTHGDKDEFDPAKWSSTPGELPP. The segment covering 8 to 17 has biased composition (basic and acidic residues); the sequence is THGDKDEFDP. Valine 79 and arginine 146 together coordinate FAD. The active site involves arginine 227. Positions 358 and 371 each coordinate FAD.

Belongs to the paxM FAD-dependent monooxygenase family. Requires FAD as cofactor.

The protein operates within secondary metabolite biosynthesis. Functionally, FAD-dependent monooxygenase; part of the gene cluster that mediates the biosynthesis of the tetrahydroxanthone dimer secalonic acid D. The pathway begins with the synthesis of atrochrysone thioester by the polyketide synthase AacuL. The atrochrysone carboxyl ACP thioesterase AacuM then breaks the thioester bond and releases the atrochrysone carboxylic acid from AacuL. Atrochrysone carboxylic acid is decarboxylated by the decarboxylase AacuI, and oxidized by the anthrone oxygenase AacuG to yield emodin. Emodin is then reduced to emodin hydroquinone by a yet unidentified oxidoreductase. A-ring reduction by the short chain dehydrogenase AacuN, dehydration by the scytalone dehydratase-like protein AacuK and probable spontaneous re-oxidation, results in overall deoxygenation to chrysophanol. Baeyer-Villiger oxidation by the Baeyer-Villiger monooxygenase (BVMO) AacuH then yields monodictyphenone. Monodictyphenone is transformed into compounds with the tetrahydroxanthone skeleton via methylesterification by the methyltransferase AacuQ, followed by the action of the flavin-dependent monooxygenase AacuC, the isomerase AacuP, and the short chain dehydrogenase/reductase AacuF or AacuD. AacuF and AacuD should accept the same compound as a substrate but perform the ketoreduction with a different stereoselectivity, thus yielding blennolides B and A, respectively. In the final step of the biosynthesis, the cytochrome P450 monooxygenase AacuE accepts blennolide B and/or blennolide A to conduct the dimerization reaction to furnish the tetrahydroxanthone dimers, secalonic acids D, B, and F. This chain is FAD-dependent monooxygenase AacuC, found in Aspergillus aculeatus (strain ATCC 16872 / CBS 172.66 / WB 5094).